The chain runs to 257 residues: Dof zinc finger protein DOF5.3 (257 aa).

The tract at residues 23–50 (LSYSSNPTPLDNDQKKPSPATAVTRPQP) is disordered. Polar residues predominate over residues 24 to 33 (SYSSNPTPLD). The Dof-type zinc finger occupies 55-109 (LRCPRCDSTNTKFCYYNNYSLTQPRYFCKSCRRYWTKGGTLRNIPVGGGCRKNKR). Residues C57, C60, C82, and C85 each coordinate Zn(2+). The segment at 104-127 (CRKNKRSTSSAARSLRTTPEPASH) is disordered. The span at 110-121 (STSSAARSLRTT) shows a compositional bias: low complexity.

As to expression, the PEAR proteins (e.g. DOF2.4, DOF5.1, DOF3.2, DOF1.1, DOF5.6 and DOF5.3) form a short-range concentration gradient that peaks at protophloem sieve elements (PSE). Accumulates in the stele.

It localises to the nucleus. Its function is as follows. Transcription factor that binds specifically to a 5'-AA[AG]G-3' consensus core sequence. The PEAR proteins (e.g. DOF2.4, DOF5.1, DOF3.2, DOF1.1, DOF5.6 and DOF5.3) activate gene expression that promotes radial growth of protophloem sieve elements. In Arabidopsis thaliana (Mouse-ear cress), this protein is Dof zinc finger protein DOF5.3.